Consider the following 184-residue polypeptide: Protein DMP2 (184 aa).

4 consecutive transmembrane segments (helical) span residues Leu-19–Thr-39, Leu-45–Phe-65, Val-105–Asp-125, and Ile-142–Phe-162.

This sequence belongs to the plant DMP1 protein family. Expressed constitutively in leaves, stems, flowers, siliques and roots.

Its subcellular location is the endoplasmic reticulum membrane. It is found in the vacuole membrane. Its function is as follows. Involved in membrane remodeling. This chain is Protein DMP2, found in Arabidopsis thaliana (Mouse-ear cress).